A 1075-amino-acid polypeptide reads, in one-letter code: DNA-directed RNA polymerase subunit beta (1075 aa).

Belongs to the RNA polymerase beta chain family. As to quaternary structure, in plastids the minimal PEP RNA polymerase catalytic core is composed of four subunits: alpha, beta, beta', and beta''. When a (nuclear-encoded) sigma factor is associated with the core the holoenzyme is formed, which can initiate transcription.

The protein resides in the plastid. The protein localises to the chloroplast. It carries out the reaction RNA(n) + a ribonucleoside 5'-triphosphate = RNA(n+1) + diphosphate. Functionally, DNA-dependent RNA polymerase catalyzes the transcription of DNA into RNA using the four ribonucleoside triphosphates as substrates. In Pinus thunbergii (Japanese black pine), this protein is DNA-directed RNA polymerase subunit beta.